A 1641-amino-acid chain; its full sequence is Vitellogenin-1 (1641 aa).

A signal peptide spans 1-18 (MWYLAFLLIIGAYAADHA). The 772-residue stretch at 19-790 (WETGNEYHYL…SQDTTVPKSS (772 aa)) folds into the Vitellogenin domain. The cysteines at positions 172 and 211 are disulfide-linked. Residues 322–334 (LRQPSVSLNSMEA) are compositionally biased toward polar residues. The tract at residues 322 to 372 (LRQPSVSLNSMEARSSENSNEENRSDDDRSNFLSNSGEEREYLQSKPTLNE) is disordered. The span at 342–351 (EENRSDDDRS) shows a compositional bias: basic and acidic residues. N-linked (GlcNAc...) asparagine glycans are attached at residues asparagine 344, asparagine 549, asparagine 566, asparagine 831, asparagine 875, asparagine 898, asparagine 1001, asparagine 1053, asparagine 1268, asparagine 1393, asparagine 1396, asparagine 1505, and asparagine 1523. The VWFD domain maps to 1410-1597 (ESVCVLDKTH…TYAMTQESCQ (188 aa)). Cysteine 1435 and cysteine 1596 are disulfide-bonded. Positions 1594–1641 (ESCQGPAPENKRKAEQSTCMSRSYRPSDVISDREAGRSSTKNRGWGYH) are disordered.

As to expression, hemolymph.

It is found in the secreted. Functionally, precursor of the egg-yolk proteins that are sources of nutrients during embryonic development. The protein is Vitellogenin-1 of Solenopsis invicta (Red imported fire ant).